A 2156-amino-acid polypeptide reads, in one-letter code: MAM and LDL-receptor class A domain-containing protein 1 (2156 aa).

Residues Met-1–Ala-31 form the signal peptide. Residues Gln-32–Thr-2076 are Vesicular-facing. An LDL-receptor class A 1 domain is found at Gln-33 to Leu-68. Cystine bridges form between Cys-40–Cys-58 and Cys-52–Cys-67. MAM domains lie at Glu-71–Pro-229 and Gln-268–Gln-427. One can recognise an LDL-receptor class A 2 domain in the interval Leu-433–Ser-471. Cystine bridges form between Cys-434-Cys-446, Cys-441-Cys-459, and Cys-453-Cys-470. MAM domains are found at residues Leu-474 to Ile-637 and Ser-652 to Leu-816. Residue Asn-813 is glycosylated (N-linked (GlcNAc...) asparagine). The 39-residue stretch at Ser-822–Ala-860 folds into the LDL-receptor class A 3 domain. Cystine bridges form between Cys-823–Cys-837, Cys-831–Cys-850, and Cys-844–Cys-859. One can recognise an MAM 5 domain in the interval Leu-863–Leu-1024. Asn-1049 is a glycosylation site (N-linked (GlcNAc...) asparagine). The LDL-receptor class A 4 domain occupies Asn-1049–Val-1086. 3 disulfides stabilise this stretch: Cys-1050-Cys-1063, Cys-1057-Cys-1076, and Cys-1070-Cys-1085. The MAM 6 domain maps to Glu-1088 to Pro-1256. N-linked (GlcNAc...) asparagine glycosylation occurs at Asn-1199. The region spanning Lys-1263–Arg-1301 is the LDL-receptor class A 5 domain. 3 disulfides stabilise this stretch: Cys-1264-Cys-1276, Cys-1271-Cys-1289, and Cys-1283-Cys-1300. Positions Gly-1305–Ser-1465 constitute an MAM 7 domain. Asn-1414 carries N-linked (GlcNAc...) asparagine glycosylation. Residues Phe-1482 to Gly-1518 form the LDL-receptor class A 6 domain. Disulfide bonds link Cys-1483-Cys-1495, Cys-1490-Cys-1508, and Cys-1502-Cys-1517. Positions Ser-1519–Thr-1676 constitute an MAM 8 domain. One can recognise an LDL-receptor class A 7 domain in the interval Leu-1683–Ala-1720. 3 disulfides stabilise this stretch: Cys-1684–Cys-1697, Cys-1692–Cys-1710, and Cys-1704–Cys-1719. The MAM 9 domain maps to Gly-1727 to Thr-1892. 3 consecutive LDL-receptor class A domains span residues Pro-1902–Pro-1939, Leu-1946–Ser-1982, and Ser-1985–Ser-2023. 12 disulfide bridges follow: Cys-1903/Cys-1916, Cys-1910/Cys-1929, Cys-1923/Cys-1938, Cys-1947/Cys-1959, Cys-1954/Cys-1972, Cys-1966/Cys-1981, Cys-1986/Cys-1999, Cys-1993/Cys-2012, Cys-2006/Cys-2022, Cys-2025/Cys-2036, Cys-2030/Cys-2045, and Cys-2047/Cys-2056. One can recognise an EGF-like domain in the interval Glu-2024 to His-2057. A helical transmembrane segment spans residues Leu-2077–Leu-2097. The Cytoplasmic segment spans residues Ala-2098 to Lys-2156.

In terms of assembly, interacts with FGF19. In terms of tissue distribution, strongly expressed in the small intestine.

It localises to the cytoplasmic vesicle membrane. In terms of biological role, enhances production and/or transport of FGF19 and thus has a role in regulation of bile acid synthesis. In Homo sapiens (Human), this protein is MAM and LDL-receptor class A domain-containing protein 1.